The following is an 810-amino-acid chain: Phenylalanine--tRNA ligase beta subunit (810 aa).

The 116-residue stretch at 39-154 (APPTEKIVVG…EGTPVGQDIR (116 aa)) folds into the tRNA-binding domain. In terms of domain architecture, B5 spans 405–480 (PQRAPVSMRA…RIYGFEKIPA (76 aa)). Mg(2+) is bound by residues Asp458, Asp464, Glu467, and Glu468. The 103-residue stretch at 707-809 (SKFPPVRRDI…MARVYGARLR (103 aa)) folds into the FDX-ACB domain.

The protein belongs to the phenylalanyl-tRNA synthetase beta subunit family. Type 1 subfamily. As to quaternary structure, tetramer of two alpha and two beta subunits. The cofactor is Mg(2+).

The protein resides in the cytoplasm. The catalysed reaction is tRNA(Phe) + L-phenylalanine + ATP = L-phenylalanyl-tRNA(Phe) + AMP + diphosphate + H(+). The sequence is that of Phenylalanine--tRNA ligase beta subunit from Burkholderia mallei (strain ATCC 23344).